The chain runs to 103 residues: Pyrimidine/purine nucleoside phosphorylase (103 aa).

It belongs to the nucleoside phosphorylase PpnP family.

It carries out the reaction a purine D-ribonucleoside + phosphate = a purine nucleobase + alpha-D-ribose 1-phosphate. It catalyses the reaction adenosine + phosphate = alpha-D-ribose 1-phosphate + adenine. The enzyme catalyses cytidine + phosphate = cytosine + alpha-D-ribose 1-phosphate. The catalysed reaction is guanosine + phosphate = alpha-D-ribose 1-phosphate + guanine. It carries out the reaction inosine + phosphate = alpha-D-ribose 1-phosphate + hypoxanthine. It catalyses the reaction thymidine + phosphate = 2-deoxy-alpha-D-ribose 1-phosphate + thymine. The enzyme catalyses uridine + phosphate = alpha-D-ribose 1-phosphate + uracil. The catalysed reaction is xanthosine + phosphate = alpha-D-ribose 1-phosphate + xanthine. In terms of biological role, catalyzes the phosphorolysis of diverse nucleosides, yielding D-ribose 1-phosphate and the respective free bases. Can use uridine, adenosine, guanosine, cytidine, thymidine, inosine and xanthosine as substrates. Also catalyzes the reverse reactions. In Cupriavidus metallidurans (strain ATCC 43123 / DSM 2839 / NBRC 102507 / CH34) (Ralstonia metallidurans), this protein is Pyrimidine/purine nucleoside phosphorylase.